Consider the following 174-residue polypeptide: Transcriptional repressor NrdR (174 aa).

The segment at 3–34 (CPFCQHSDTRVIDSRVSEDGTTIRRRRECEAC) is a zinc-finger region. Residues 49–139 (PTVVKSDGGR…VYRSFQDVAD (91 aa)) enclose the ATP-cone domain.

It belongs to the NrdR family. Zn(2+) is required as a cofactor.

Functionally, negatively regulates transcription of bacterial ribonucleotide reductase nrd genes and operons by binding to NrdR-boxes. This chain is Transcriptional repressor NrdR, found in Xanthomonas oryzae pv. oryzae (strain MAFF 311018).